A 183-amino-acid chain; its full sequence is Endoribonuclease YbeY (183 aa).

3 residues coordinate Zn(2+): His143, His147, and His153.

Belongs to the endoribonuclease YbeY family. Zn(2+) serves as cofactor.

It localises to the cytoplasm. In terms of biological role, single strand-specific metallo-endoribonuclease involved in late-stage 70S ribosome quality control and in maturation of the 3' terminus of the 16S rRNA. This chain is Endoribonuclease YbeY, found in Rickettsia bellii (strain OSU 85-389).